Reading from the N-terminus, the 316-residue chain is Pantothenate kinase (316 aa).

99-106 (GSVAVGKS) is an ATP binding site.

Belongs to the prokaryotic pantothenate kinase family.

Its subcellular location is the cytoplasm. It carries out the reaction (R)-pantothenate + ATP = (R)-4'-phosphopantothenate + ADP + H(+). It participates in cofactor biosynthesis; coenzyme A biosynthesis; CoA from (R)-pantothenate: step 1/5. The protein is Pantothenate kinase (coaA) of Pasteurella multocida (strain Pm70).